Consider the following 156-residue polypeptide: ATP synthase subunit b (156 aa).

Residues 7 to 29 form a helical membrane-spanning segment; that stretch reads LFAQMVVFLVLAWFTMKFVWPPL.

Belongs to the ATPase B chain family. In terms of assembly, F-type ATPases have 2 components, F(1) - the catalytic core - and F(0) - the membrane proton channel. F(1) has five subunits: alpha(3), beta(3), gamma(1), delta(1), epsilon(1). F(0) has three main subunits: a(1), b(2) and c(10-14). The alpha and beta chains form an alternating ring which encloses part of the gamma chain. F(1) is attached to F(0) by a central stalk formed by the gamma and epsilon chains, while a peripheral stalk is formed by the delta and b chains.

Its subcellular location is the cell inner membrane. Its function is as follows. F(1)F(0) ATP synthase produces ATP from ADP in the presence of a proton or sodium gradient. F-type ATPases consist of two structural domains, F(1) containing the extramembraneous catalytic core and F(0) containing the membrane proton channel, linked together by a central stalk and a peripheral stalk. During catalysis, ATP synthesis in the catalytic domain of F(1) is coupled via a rotary mechanism of the central stalk subunits to proton translocation. Functionally, component of the F(0) channel, it forms part of the peripheral stalk, linking F(1) to F(0). The chain is ATP synthase subunit b from Burkholderia cenocepacia (strain ATCC BAA-245 / DSM 16553 / LMG 16656 / NCTC 13227 / J2315 / CF5610) (Burkholderia cepacia (strain J2315)).